A 474-amino-acid polypeptide reads, in one-letter code: tRNA-2-methylthio-N(6)-dimethylallyladenosine synthase (474 aa).

The region spanning 3–120 (KKLHIKTWGC…LPEMINSVRG (118 aa)) is the MTTase N-terminal domain. 6 residues coordinate [4Fe-4S] cluster: Cys-12, Cys-49, Cys-83, Cys-157, Cys-161, and Cys-164. A Radical SAM core domain is found at 143–378 (RADGPSAFVS…INQQVTAWSR (236 aa)). The TRAM domain occupies 378–441 (RRMLGTTQRI…TNSMRGKVVR (64 aa)).

It belongs to the methylthiotransferase family. MiaB subfamily. As to quaternary structure, monomer. Requires [4Fe-4S] cluster as cofactor.

It is found in the cytoplasm. The enzyme catalyses N(6)-dimethylallyladenosine(37) in tRNA + (sulfur carrier)-SH + AH2 + 2 S-adenosyl-L-methionine = 2-methylsulfanyl-N(6)-dimethylallyladenosine(37) in tRNA + (sulfur carrier)-H + 5'-deoxyadenosine + L-methionine + A + S-adenosyl-L-homocysteine + 2 H(+). Its function is as follows. Catalyzes the methylthiolation of N6-(dimethylallyl)adenosine (i(6)A), leading to the formation of 2-methylthio-N6-(dimethylallyl)adenosine (ms(2)i(6)A) at position 37 in tRNAs that read codons beginning with uridine. The polypeptide is tRNA-2-methylthio-N(6)-dimethylallyladenosine synthase (Enterobacter sp. (strain 638)).